The following is a 70-amino-acid chain: Small ribosomal subunit protein bS21 (70 aa).

It belongs to the bacterial ribosomal protein bS21 family.

The sequence is that of Small ribosomal subunit protein bS21 (rpsU) from Helicobacter pylori (strain J99 / ATCC 700824) (Campylobacter pylori J99).